Reading from the N-terminus, the 495-residue chain is Pre-glycoprotein polyprotein GP complex (495 aa).

Residue Gly2 is the site of N-myristoyl glycine; by host attachment. At 2 to 17 (GQIITFFQEVPHIIEE) the chain is on the extracellular side. A helical transmembrane segment spans residues 18–33 (VMNIVLITLSLLAILK). At 34–58 (GVYNVMTCGLIGLISFLLLCGKSCS) the chain is on the cytoplasmic side. Cys57 contributes to the Zn(2+) binding site. Residues 59-436 (LIYKDTYNFS…QGKTPLGLVD (378 aa)) are Extracellular-facing. Asn78, Asn88, Asn107, Asn117, and Asn165 each carry an N-linked (GlcNAc...) asparagine; by host glycan. 6 disulfides stabilise this stretch: Cys85-Cys235, Cys116-Cys153, Cys178-Cys216, Cys283-Cys296, Cys305-Cys314, and Cys368-Cys389. N-linked (GlcNAc...) asparagine; by host glycosylation occurs at Asn228. N-linked (GlcNAc...) asparagine; by host glycans are attached at residues Asn369, Asn377, Asn394, and Asn399. Residues 437–457 (LFIFSTSFYSITVFLHLIKIP) traverse the membrane as a helical segment. Topologically, residues 458 to 495 (THRHIVGQGCPKPHRLNSRAICSCGAYKQPGLPTKWKR) are cytoplasmic. The Zn(2+) site is built by His459, His461, Cys467, His471, Cys479, and Cys481.

The protein belongs to the arenaviridae GPC protein family. As to quaternary structure, interacts with glycoprotein G2. Part of the GP complex (GP-C) together with glycoprotein G1 and glycoprotein G2. The GP-complex interacts with protein Z, which interacts with ribonucleocapsid; these interactions may induce virion budding. In terms of assembly, homotrimer; disulfide-linked. In pre-fusion state, G1 homotrimers bind G2 homotrimers via ionic interactions. Part of the GP complex (GP-C) together with glycoprotein G2 and the stable signal peptide. The GP-complex interacts with protein Z, which interacts with ribonucleocapsid; these interactions may induce virion budding. Homotrimer. Interacts with the stable signal peptide. In pre-fusion state, G2 homotrimers bind G1 homotrimers via ionic interactions. Part of the GP complex (GP-C) together with glycoprotein G1 and the stable signal peptide. Acidification in the endosome triggers rearrangements, which ultimately leads to a 6 helix bundle formed by the two heptad repeat domains (HR1 and HR2) in post-fusion state. The GP-complex interacts with protein Z, which interacts with ribonucleocapsid; these interactions may induce virion budding. Post-translationally, specific enzymatic cleavages in vivo yield mature proteins. GP-C polyprotein is cleaved in the endoplasmic reticulum by the host protease MBTPS1. Only cleaved glycoprotein is incorporated into virions. In terms of processing, the SSP remains stably associated with the GP complex following cleavage by signal peptidase and plays crucial roles in the trafficking of GP through the secretory pathway. Myristoylation is necessary for GP2-mediated fusion activity.

Its subcellular location is the virion membrane. The protein resides in the host endoplasmic reticulum membrane. It is found in the host Golgi apparatus membrane. The protein localises to the host cell membrane. Functionally, functions as a cleaved signal peptide that is retained as the third component of the GP complex (GP-C). Helps to stabilize the spike complex in its native conformation. The SSP is required for efficient glycoprotein expression, post-translational maturation cleavage of G1 and G2, glycoprotein transport to the cell surface plasma membrane, formation of infectious virus particles, and acid pH-dependent glycoprotein-mediated cell fusion. Forms the virion spikes together with glycoprotein G2. The glycoprotein spike trimers are connected to the underlying matrix. Mediates virus attachment to host receptor alpha-dystroglycan DAG1. This interaction leads to virion entry into the host cell through the endosomal pathway. In terms of biological role, forms the virion spikes together with glycoprotein G1. The glycoprotein spike trimers are connected to the underlying matrix. Class I viral fusion protein that directs fusion of viral and host endosomal membranes, leading to delivery of the nucleocapsid into the cytoplasm. Membrane fusion is mediated by irreversible conformational changes induced by acidification. In Ippy mammarenavirus (isolate Rat/Central African Republic/Dak An B 188 d/1970) (IPPYV), this protein is Pre-glycoprotein polyprotein GP complex.